The chain runs to 167 residues: Transcriptional repressor NrdR (167 aa).

A zinc finger lies at 3-34 (CPFCRNPDSRVVDSRMADDGSAIRRRRQCPEC). An ATP-cone domain is found at 46 to 136 (LSVIKRSGVG…VYQAFESLED (91 aa)). Residues 148–167 (AQEDAAERPATPRKPEKTSL) are disordered.

Belongs to the NrdR family. The cofactor is Zn(2+).

Negatively regulates transcription of bacterial ribonucleotide reductase nrd genes and operons by binding to NrdR-boxes. The chain is Transcriptional repressor NrdR from Pseudarthrobacter chlorophenolicus (strain ATCC 700700 / DSM 12829 / CIP 107037 / JCM 12360 / KCTC 9906 / NCIMB 13794 / A6) (Arthrobacter chlorophenolicus).